Reading from the N-terminus, the 506-residue chain is 2,3-bisphosphoglycerate-independent phosphoglycerate mutase (506 aa).

The Mn(2+) site is built by aspartate 13 and serine 63. Residue serine 63 is the Phosphoserine intermediate of the active site. Substrate is bound by residues histidine 124, 153 to 154 (RD), arginine 183, arginine 189, 254 to 257 (RADR), and lysine 330. Mn(2+)-binding residues include aspartate 396, histidine 400, aspartate 437, histidine 438, and histidine 456.

Belongs to the BPG-independent phosphoglycerate mutase family. As to quaternary structure, monomer. Mn(2+) is required as a cofactor.

It catalyses the reaction (2R)-2-phosphoglycerate = (2R)-3-phosphoglycerate. It participates in carbohydrate degradation; glycolysis; pyruvate from D-glyceraldehyde 3-phosphate: step 3/5. Its function is as follows. Catalyzes the interconversion of 2-phosphoglycerate and 3-phosphoglycerate. The polypeptide is 2,3-bisphosphoglycerate-independent phosphoglycerate mutase (Cereibacter sphaeroides (strain ATCC 17029 / ATH 2.4.9) (Rhodobacter sphaeroides)).